Consider the following 204-residue polypeptide: Tumor necrosis factor alpha-induced protein 8-like protein 3 (204 aa).

A compositionally biased stretch (acidic residues) spans 1–10 (MDSDSGEQSE). A disordered region spans residues 1 to 20 (MDSDSGEQSEGEPGTAAGPH). The interval 21-204 (VFSSKNLALQ…INKLLDDKIL (184 aa)) is binding to phosphoinositides.

The protein belongs to the TNFAIP8 family. In terms of tissue distribution, widely expressed (at protein level).

It is found in the cytoplasm. The protein localises to the cell membrane. Acts as a lipid transfer protein. Preferentially captures and shuttles two lipid second messengers, i.e., phosphatidylinositol 4,5- bisphosphate and phosphatidylinositol 3,4,5-trisphosphate and increases their levels in the plasma membrane. Additionally, may also function as a lipid-presenting protein to enhance the activity of the PI3K-AKT and MEK-ERK pathways. May act as a regulator of tumorigenesis through its activation of phospholipid signaling. This is Tumor necrosis factor alpha-induced protein 8-like protein 3 (Tnfaip8l3) from Mus musculus (Mouse).